Consider the following 593-residue polypeptide: Transcriptional repressor p66-beta (593 aa).

Serine 17 bears the Phosphoserine mark. Residues lysine 33, lysine 66, and lysine 97 each participate in a glycyl lysine isopeptide (Lys-Gly) (interchain with G-Cter in SUMO2) cross-link. Residues 62–123 (ELPTKQDGSG…PERGRLTPSP (62 aa)) form a disordered region. Composition is skewed to basic and acidic residues over residues 74–100 (GYEEKLNGNLRPHGDNRTAGRPGKENI) and 108–118 (SARRSEPERGR). Phosphothreonine is present on threonine 120. Phosphoserine occurs at positions 122, 129, 134, and 135. Residues 140–194 (SRMEERLKAANLEMFKGKGIEERQQLIKQLRDELRLEEARLVLLKKLRQSQLQKE) are a coiled coil. Lysine 147 participates in a covalent cross-link: Glycyl lysine isopeptide (Lys-Gly) (interchain with G-Cter in SUMO2). The interval 165–195 (LIKQLRDELRLEEARLVLLKKLRQSQLQKEN) is CR1; interaction with MBD2 and MBD3. A Glycyl lysine isopeptide (Lys-Gly) (interchain with G-Cter in SUMO2) cross-link involves residue lysine 199. Serine 208 bears the Phosphoserine mark. The tract at residues 213–235 (SPAHVGQQGLSKLPSRPGAQGVE) is disordered. Lysine 281 is covalently cross-linked (Glycyl lysine isopeptide (Lys-Gly) (interchain with G-Cter in SUMO2)). Residues serine 333, serine 338, and serine 340 each carry the phosphoserine modification. The interval 340–480 (SAMTDAANSQ…QEQEIEQRLQ (141 aa)) is CR2; histone tail-binding. Residues lysine 353, lysine 454, and lysine 467 each participate in a glycyl lysine isopeptide (Lys-Gly) (interchain with G-Cter in SUMO2) cross-link. The segment at 414 to 467 (RVEPFVCAQCRTDFTPHWKQEKNGKILCEQCMTSNQKKALKAEHTNRLKNAFVK) adopts a GATA-type zinc-finger fold. Positions 449–482 (QKKALKAEHTNRLKNAFVKALQQEQEIEQRLQQQ) form a coiled coil. The residue at position 486 (serine 486) is a Phosphoserine. Residue lysine 498 forms a Glycyl lysine isopeptide (Lys-Gly) (interchain with G-Cter in SUMO2) linkage.

In terms of assembly, homooligomer. Component of the nucleosome remodeling and deacetylase (NuRD) repressor complex, composed of core proteins MTA1, MTA2, MTA3, RBBP4, RBBP7, HDAC1, HDAC2, MBD2, MBD3, and peripherally associated proteins CDK2AP1, CDK2AP2, GATAD2A, GATAD2B, CHD3, CHD4 and CHD5. The exact stoichiometry of the NuRD complex is unknown, and some subunits such as MBD2 and MBD3, GATAD2A and GATAD2B, and CHD3, CHD4 and CHD5 define mutually exclusive NuRD complexes. Interacts with MBD2; this is required for the enhancement of MBD2-mediated repression and for targeting to the chromatin. Interacts with MBD3. Component of the MeCP1 histone deacetylase complex. Interacts with histone tails, including that of histones H2A, H2B, H3 and H4. Interacts with ERCC6. In terms of tissue distribution, widely expressed.

It is found in the nucleus speckle. It localises to the nucleus. Its subcellular location is the chromosome. Its function is as follows. Transcriptional repressor. Acts as a component of the histone deacetylase NuRD complex which participates in the remodeling of chromatin. Enhances MBD2-mediated repression. Efficient repression requires the presence of GATAD2A. Targets MBD3 to discrete loci in the nucleus. May play a role in synapse development. The sequence is that of Transcriptional repressor p66-beta (GATAD2B) from Homo sapiens (Human).